We begin with the raw amino-acid sequence, 324 residues long: uncharacterized protein (324 aa).

This is an uncharacterized protein from Saccharomyces cerevisiae (strain ATCC 204508 / S288c) (Baker's yeast).